Consider the following 65-residue polypeptide: Large ribosomal subunit protein bL35 (65 aa).

Residues 1–26 (MPKIKTVRGAAKRFKKTASGGFKRKQ) form a disordered region. Residues 10–26 (AAKRFKKTASGGFKRKQ) show a composition bias toward basic residues.

It belongs to the bacterial ribosomal protein bL35 family.

The chain is Large ribosomal subunit protein bL35 from Mannheimia succiniciproducens (strain KCTC 0769BP / MBEL55E).